A 471-amino-acid polypeptide reads, in one-letter code: MDYLPLFAELKQRPVLVIGGGEIAERKIKFLLRAQAQVQVVAETLSPALADLAARQALSWRATEFSDSLVDDVFLVIAATEDDALNQRVFAAANARYRLVNVVDNQALCSFVFPSIVDRSPLLVAISSSGKAPVLSRILREKIEALLPTNLGRLAESASYWRNHLKTRLTTTEARRRFWERVFTGRFASLMVAGNSAEAEKALQDELDKPERETGEIILVGAGPGDAGLLTLRGLQAIQQADVVFHDHLVTQPVLELVRRDAELICVGKRAGEHSVPQHETNQLLVEAAKAGKTVVRLKGGDPFIFGRGAEELQAAAEAGIPFQVVPGVTAAAGATAYAGIPLTHRDYAQSAVFVTGHYKPDSAPFDWSLLAKSQQTLAIYMGTMKAAEISAQLIAHGRDSDTPVAVISRGTRDDQQTITGTLQQLEHLAKDAPMPALLVVGEVVQLHQQLAWFQHTSSAEGFNASVVNLA.

Residues 1–203 are precorrin-2 dehydrogenase /sirohydrochlorin ferrochelatase; the sequence is MDYLPLFAEL…GNSAEAEKAL (203 aa). Residues 22-23 and 43-44 contribute to the NAD(+) site; these read EI and ET. The residue at position 128 (Ser128) is a Phosphoserine. A uroporphyrinogen-III C-methyltransferase region spans residues 215-471; the sequence is GEIILVGAGP…GFNASVVNLA (257 aa). Pro224 lines the S-adenosyl-L-methionine pocket. Asp247 serves as the catalytic Proton acceptor. The active-site Proton donor is the Lys269. S-adenosyl-L-methionine-binding positions include 300–302, Ile305, 330–331, Met382, and Gly411; these read GGD and TA.

It in the N-terminal section; belongs to the precorrin-2 dehydrogenase / sirohydrochlorin ferrochelatase family. The protein in the C-terminal section; belongs to the precorrin methyltransferase family.

It catalyses the reaction uroporphyrinogen III + 2 S-adenosyl-L-methionine = precorrin-2 + 2 S-adenosyl-L-homocysteine + H(+). The catalysed reaction is precorrin-2 + NAD(+) = sirohydrochlorin + NADH + 2 H(+). It carries out the reaction siroheme + 2 H(+) = sirohydrochlorin + Fe(2+). It participates in cofactor biosynthesis; adenosylcobalamin biosynthesis; precorrin-2 from uroporphyrinogen III: step 1/1. The protein operates within cofactor biosynthesis; adenosylcobalamin biosynthesis; sirohydrochlorin from precorrin-2: step 1/1. It functions in the pathway porphyrin-containing compound metabolism; siroheme biosynthesis; precorrin-2 from uroporphyrinogen III: step 1/1. Its pathway is porphyrin-containing compound metabolism; siroheme biosynthesis; siroheme from sirohydrochlorin: step 1/1. It participates in porphyrin-containing compound metabolism; siroheme biosynthesis; sirohydrochlorin from precorrin-2: step 1/1. Its function is as follows. Multifunctional enzyme that catalyzes the SAM-dependent methylations of uroporphyrinogen III at position C-2 and C-7 to form precorrin-2 via precorrin-1. Then it catalyzes the NAD-dependent ring dehydrogenation of precorrin-2 to yield sirohydrochlorin. Finally, it catalyzes the ferrochelation of sirohydrochlorin to yield siroheme. The sequence is that of Siroheme synthase 1 from Klebsiella pneumoniae subsp. pneumoniae (strain ATCC 700721 / MGH 78578).